The chain runs to 109 residues: Oncomodulin-1 (109 aa).

At S2 the chain carries N-acetylserine. 2 consecutive EF-hand domains span residues M39 to G74 and L78 to S109. Residues D52, D54, S56, Y58, E63, D91, D93, D95, K97, and E102 each coordinate Ca(2+).

It belongs to the parvalbumin family.

Has some calmodulin-like activity with respect to enzyme activation and growth regulation. Binds two calcium ions. In Homo sapiens (Human), this protein is Oncomodulin-1 (OCM).